Consider the following 296-residue polypeptide: uncharacterized protein (296 aa).

6 helical membrane-spanning segments follow: residues 10-29 (FSTLIILGITLGIDLIFSLL), 36-58 (YIVLRILEIFIVFFNIYQLYYIL), 112-131 (FFALGTFSVNDIGIVNMFVT), 188-210 (ILIFLISIVILMVTIIPFILYLR), 241-260 (MMYGAYNMIIFFCIYYSAYF), and 273-295 (MYISFLVAFIFLIFQFKIYVTYI).

It localises to the cell membrane. This is an uncharacterized protein from Clostridium acetobutylicum (strain ATCC 824 / DSM 792 / JCM 1419 / IAM 19013 / LMG 5710 / NBRC 13948 / NRRL B-527 / VKM B-1787 / 2291 / W).